The following is a 176-amino-acid chain: Large ribosomal subunit protein uL6 (176 aa).

This sequence belongs to the universal ribosomal protein uL6 family. As to quaternary structure, part of the 50S ribosomal subunit.

This protein binds to the 23S rRNA, and is important in its secondary structure. It is located near the subunit interface in the base of the L7/L12 stalk, and near the tRNA binding site of the peptidyltransferase center. The sequence is that of Large ribosomal subunit protein uL6 from Paraburkholderia phymatum (strain DSM 17167 / CIP 108236 / LMG 21445 / STM815) (Burkholderia phymatum).